Consider the following 321-residue polypeptide: L-lactate dehydrogenase (321 aa).

Residues valine 19, aspartate 40, lysine 45, tyrosine 71, and 85 to 86 (GA) contribute to the NAD(+) site. Residues glutamine 88, arginine 94, and 126-129 (NPVD) contribute to the substrate site. NAD(+) is bound by residues 124 to 126 (ATN) and serine 149. 154 to 157 (DTAR) serves as a coordination point for substrate. Residues arginine 159 and histidine 174 each contribute to the beta-D-fructose 1,6-bisphosphate site. The Proton acceptor role is filled by histidine 181. At tyrosine 226 the chain carries Phosphotyrosine. Threonine 235 contacts substrate.

It belongs to the LDH/MDH superfamily. LDH family. In terms of assembly, homotetramer.

Its subcellular location is the cytoplasm. The catalysed reaction is (S)-lactate + NAD(+) = pyruvate + NADH + H(+). The protein operates within fermentation; pyruvate fermentation to lactate; (S)-lactate from pyruvate: step 1/1. Its activity is regulated as follows. Allosterically activated by fructose 1,6-bisphosphate (FBP). Functionally, catalyzes the conversion of lactate to pyruvate. The protein is L-lactate dehydrogenase of Oceanobacillus iheyensis (strain DSM 14371 / CIP 107618 / JCM 11309 / KCTC 3954 / HTE831).